Reading from the N-terminus, the 272-residue chain is NAD kinase (272 aa).

Asp-62 acts as the Proton acceptor in catalysis. NAD(+) contacts are provided by residues 62-63 (DG), Arg-67, 129-130 (NE), Arg-140, Lys-157, Asp-159, Ile-167, 170-175 (SSYSSS), Ala-194, and Gln-229.

Belongs to the NAD kinase family. The cofactor is a divalent metal cation.

It is found in the cytoplasm. It carries out the reaction NAD(+) + ATP = ADP + NADP(+) + H(+). Functionally, involved in the regulation of the intracellular balance of NAD and NADP, and is a key enzyme in the biosynthesis of NADP. Catalyzes specifically the phosphorylation on 2'-hydroxyl of the adenosine moiety of NAD to yield NADP. In Thermoplasma acidophilum (strain ATCC 25905 / DSM 1728 / JCM 9062 / NBRC 15155 / AMRC-C165), this protein is NAD kinase.